Consider the following 96-residue polypeptide: Small ribosomal subunit protein bS6 (96 aa).

It belongs to the bacterial ribosomal protein bS6 family.

In terms of biological role, binds together with bS18 to 16S ribosomal RNA. This Mycobacteroides abscessus (strain ATCC 19977 / DSM 44196 / CCUG 20993 / CIP 104536 / JCM 13569 / NCTC 13031 / TMC 1543 / L948) (Mycobacterium abscessus) protein is Small ribosomal subunit protein bS6.